The sequence spans 232 residues: Orotidine 5'-phosphate decarboxylase (232 aa).

Substrate contacts are provided by residues D11, K33, D61–T70, T116, R179, Q188, G208, and R209. Catalysis depends on K63, which acts as the Proton donor.

This sequence belongs to the OMP decarboxylase family. Type 1 subfamily. Homodimer.

It catalyses the reaction orotidine 5'-phosphate + H(+) = UMP + CO2. It participates in pyrimidine metabolism; UMP biosynthesis via de novo pathway; UMP from orotate: step 2/2. Its function is as follows. Catalyzes the decarboxylation of orotidine 5'-monophosphate (OMP) to uridine 5'-monophosphate (UMP). The sequence is that of Orotidine 5'-phosphate decarboxylase from Cereibacter sphaeroides (strain ATCC 17023 / DSM 158 / JCM 6121 / CCUG 31486 / LMG 2827 / NBRC 12203 / NCIMB 8253 / ATH 2.4.1.) (Rhodobacter sphaeroides).